A 567-amino-acid chain; its full sequence is Lactase-like protein (567 aa).

Residues 1–21 (MKPVWVATLLWMLLLVPRLGA) form the signal peptide. The Extracellular segment spans residues 23–541 (RKGSPEEASF…LLSHMQMVTE (519 aa)). Asn-80, Asn-171, and Asn-245 each carry an N-linked (GlcNAc...) asparagine glycan. The chain crosses the membrane as a helical span at residues 542-562 (IVVPTVCSLCVLITAVLLMLL). The Cytoplasmic segment spans residues 563-567 (LRRQS).

Belongs to the glycosyl hydrolase 1 family. Klotho subfamily. May form dimers.

It is found in the endoplasmic reticulum membrane. Its function is as follows. Plays a role in formation of the lens suture in the eye, which is important for normal optical properties of the lens. The sequence is that of Lactase-like protein (LCTL) from Homo sapiens (Human).